The following is a 575-amino-acid chain: Serine/threonine-protein phosphatase 2A regulatory subunit B'' subunit beta (575 aa).

Residues 41-131 form a disordered region; it reads APGRDQPTPG…SQSIPTFYFP (91 aa). An EF-hand domain is found at 388 to 423; it reads KTPTSIEYWFRCMDLDGDGALSMFELEYFYEEQCRR. Residues Asp-401, Asp-403, Asp-405, and Glu-412 each contribute to the Ca(2+) site.

PP2A consists of a common heterodimeric core enzyme, composed of a 36 kDa catalytic subunit (subunit C) and a 65 kDa constant regulatory subunit (PR65 or subunit A), that associates with a variety of regulatory subunits. Proteins that associate with the core dimer include three families of regulatory subunits B (the R2/B/PR55/B55, R3/B''/PR72/PR130/PR59 and R5/B'/B56 families), the 48 kDa variable regulatory subunit, viral proteins, and cell signaling molecules. Interacts with N-terminal region of CDC6. Interacts with NOD2.

It localises to the nucleus. Its function is as follows. The B regulatory subunit might modulate substrate selectivity and catalytic activity, and might also direct the localization of the catalytic enzyme to a particular subcellular compartment. The polypeptide is Serine/threonine-protein phosphatase 2A regulatory subunit B'' subunit beta (PPP2R3B) (Homo sapiens (Human)).